Here is a 163-residue protein sequence, read N- to C-terminus: GPI-anchored protein LLG2 (163 aa).

Residues 1–23 form the signal peptide; sequence MEISPYCLLSLLPIFLLSGFSLS. The N-linked (GlcNAc...) asparagine glycan is linked to asparagine 52. A lipid anchor (GPI-anchor amidated serine) is attached at serine 135. Residues 136–163 constitute a propeptide, removed in mature form; sequence DSIPRASTTASLAVLSTFLVLCLLFLSS.

In terms of tissue distribution, expressed in pollen, pollen tubes, sporophytic pistil tissues, in the early stages of female gametophyte development, and in unfertilized, mature ovules.

Its subcellular location is the cell membrane. The polypeptide is GPI-anchored protein LLG2 (Arabidopsis thaliana (Mouse-ear cress)).